The sequence spans 172 residues: uncharacterized protein (172 aa).

The first 29 residues, 1–29 (MKKKQVMLALTAAAGLGLTALHSAPAAKA), serve as a signal peptide directing secretion. 2 consecutive SH3b domains span residues 42 to 105 (SDTY…MKTA) and 112 to 172 (KQTA…LQMR).

This is an uncharacterized protein from Bacillus subtilis (strain 168).